The following is a 595-amino-acid chain: Aspartate--tRNA(Asp/Asn) ligase (595 aa).

Residue Glu-178 coordinates L-aspartate. Residues 202 to 205 form an aspartate region; it reads QLFK. Arg-224 contacts L-aspartate. Residues 224-226 and Gln-233 contribute to the ATP site; that span reads RDE. His-458 contributes to the L-aspartate binding site. Glu-488 serves as a coordination point for ATP. Residue Arg-495 coordinates L-aspartate. 540-543 is a binding site for ATP; the sequence is GLDR.

The protein belongs to the class-II aminoacyl-tRNA synthetase family. Type 1 subfamily. Homodimer.

The protein localises to the cytoplasm. It carries out the reaction tRNA(Asx) + L-aspartate + ATP = L-aspartyl-tRNA(Asx) + AMP + diphosphate. Functionally, aspartyl-tRNA synthetase with relaxed tRNA specificity since it is able to aspartylate not only its cognate tRNA(Asp) but also tRNA(Asn). Reaction proceeds in two steps: L-aspartate is first activated by ATP to form Asp-AMP and then transferred to the acceptor end of tRNA(Asp/Asn). This chain is Aspartate--tRNA(Asp/Asn) ligase, found in Trichodesmium erythraeum (strain IMS101).